A 342-amino-acid chain; its full sequence is dTDP-3,4-didehydro-2,6-dideoxy-alpha-D-glucose 3-reductase (342 aa).

19-25 (CADIALR) serves as a coordination point for NADP(+). Arg-26 is a binding site for substrate. Residues 44 to 45 (SR), Tyr-65, Leu-81, and His-86 each bind NADP(+). Residue Lys-104 is the Proton donor of the active site. The NADP(+) site is built by Arg-172 and Asp-184. 2 residues coordinate substrate: Tyr-243 and Ser-263.

Belongs to the Gfo/Idh/MocA family.

The enzyme catalyses dTDP-4-dehydro-2,6-dideoxy-alpha-D-glucose + NADP(+) = dTDP-3,4-didehydro-2,6-dideoxy-alpha-D-glucose + NADPH + H(+). Its pathway is antibiotic biosynthesis; granaticin biosynthesis. Its function is as follows. Involved in the biosynthesis of the 2,6-deoxysugar, dTDP-L-rhodinose, attached to the benzoisochromane quinone chromophore to produce the aglycone antibiotics granaticin and granaticin B. Catalyzes the reduction of the C-3 keto moiety of dTDP-3,4-diketo-2,6-dideoxy-alpha-D-glucose to yield dTDP-4-keto-2,6-dideoxy-alpha-D-glucose. NADPH is the better reductant, however NADH can also be used. The protein is dTDP-3,4-didehydro-2,6-dideoxy-alpha-D-glucose 3-reductase of Streptomyces violaceoruber.